The chain runs to 195 residues: MEIIQNVFNRAENGDRIMISFPDMLSFFTVTKWLNEQFGNPLWILWTDAAVERLNHLGKKLGYPVSGNAVTIGAIKECLFLDVVARYDFYDDVSSLLKSLPVGNVLLISFGVNFLEIFGQGLSKAIEFIIEHENGILCTCTVGEAPDILLPFHDTFIEIKSGEESYLTYKSYVAKLRFSVDGGTIEMSDSFLVSE.

This is an uncharacterized protein from Archaeoglobus fulgidus (strain ATCC 49558 / DSM 4304 / JCM 9628 / NBRC 100126 / VC-16).